The following is a 434-amino-acid chain: Putative D-alanyl-D-alanine carboxypeptidase (434 aa).

A helical; Signal-anchor membrane pass occupies residues 7–25; it reads YLSLLAVSCSVSAAKYPVL.

Belongs to the peptidase S12 family. YfeW subfamily.

The protein localises to the cell inner membrane. The catalysed reaction is Preferential cleavage: (Ac)2-L-Lys-D-Ala-|-D-Ala. Also transpeptidation of peptidyl-alanyl moieties that are N-acyl substituents of D-alanine.. The sequence is that of Putative D-alanyl-D-alanine carboxypeptidase from Escherichia coli O157:H7.